A 430-amino-acid polypeptide reads, in one-letter code: Asparagine--tRNA ligase (430 aa).

The protein belongs to the class-II aminoacyl-tRNA synthetase family. Homodimer.

Its subcellular location is the cytoplasm. It catalyses the reaction tRNA(Asn) + L-asparagine + ATP = L-asparaginyl-tRNA(Asn) + AMP + diphosphate + H(+). The sequence is that of Asparagine--tRNA ligase from Listeria monocytogenes serotype 4b (strain F2365).